Here is a 302-residue protein sequence, read N- to C-terminus: Protein NEOXANTHIN-DEFICIENT 1 (302 aa).

Functionally, required for neoxanthin biosynthesis. Probably not involved directly in the enzymatic conversion of violaxanthin to neoxanthin. Is necessary but not sufficient for neoxanthin synthesis. The sequence is that of Protein NEOXANTHIN-DEFICIENT 1 from Oryza sativa subsp. japonica (Rice).